The chain runs to 234 residues: Ubiquitin domain-containing protein 1 (234 aa).

A disordered region spans residues 1–47; it reads MGGCVGTHHDSSGSLNENSDGTGVALGRNQPLKKDKPKWKSDYPMTD. Polar residues predominate over residues 12 to 21; it reads SGSLNENSDG. A compositionally biased stretch (basic and acidic residues) spans 32 to 41; sequence LKKDKPKWKS. One can recognise a Ubiquitin-like domain in the interval 152-227; sequence CQLRLRLSTG…VQVIVSQPIP (76 aa).

Its function is as follows. May be involved in the regulation of cellular senescence through a positive feedback loop with TP53. This Xenopus laevis (African clawed frog) protein is Ubiquitin domain-containing protein 1 (ubtd1).